Consider the following 151-residue polypeptide: Ribonuclease H (151 aa).

One can recognise an RNase H type-1 domain in the interval 1–143 (MYKKIEIFTD…CDQLARLAAK (143 aa)). Mg(2+) is bound by residues aspartate 10, glutamate 48, aspartate 70, and aspartate 135.

This sequence belongs to the RNase H family. In terms of assembly, monomer. It depends on Mg(2+) as a cofactor.

The protein resides in the cytoplasm. The enzyme catalyses Endonucleolytic cleavage to 5'-phosphomonoester.. Functionally, endonuclease that specifically degrades the RNA of RNA-DNA hybrids. This is Ribonuclease H from Blochmanniella pennsylvanica (strain BPEN).